A 520-amino-acid chain; its full sequence is Putative thymidine phosphorylase 1 (520 aa).

This sequence belongs to the thymidine/pyrimidine-nucleoside phosphorylase family. Type 2 subfamily.

The catalysed reaction is thymidine + phosphate = 2-deoxy-alpha-D-ribose 1-phosphate + thymine. This Cupriavidus necator (strain ATCC 17699 / DSM 428 / KCTC 22496 / NCIMB 10442 / H16 / Stanier 337) (Ralstonia eutropha) protein is Putative thymidine phosphorylase 1.